The primary structure comprises 241 residues: Transcription initiation factor TFIID subunit 14 (241 aa).

The 137-residue stretch at 1-137 folds into the YEATS domain; that stretch reads MTTVKRTVRL…PGLLKALTAT (137 aa). A disordered region spans residues 141–169; that stretch reads PGYSDEGEEARKDKRKNESEVGAGKKKAK. A compositionally biased stretch (basic and acidic residues) spans 149–159; that stretch reads EARKDKRKNES.

This sequence belongs to the TAF14 family. Component of the fcp1/TFIIF/polII complex via interaction of tfg3 with both tfg1/TFIIF-alpha and tfg2/TFIIF-beta subunits. Component of the SWI/SNF global transcription activator complex composed of at least arp9, arp42, snf5, snf22, snf30, sbf59, sol1, ssr1, ssr2, ssr3, ssr4 and tfg3. Also interacts with the TATA-binding protein (TBP). Component of the mst2 complex composed of at least eaf6, mst2, nto1, pdp3, ptf1, ptf2 and tfg3.

It is found in the nucleus. The protein resides in the nucleoplasm. In terms of biological role, functions as a component of the DNA-binding general transcription factor complex TFIID, and the RNA polymerase II associated general transcription factor complex TFIIF. Binding of TFIID to a promoter (with or without TATA element) is the initial step in preinitiation complex (PIC) formation. TFIID plays a key role in the regulation of gene expression by RNA polymerase II through different activities such as transcription activator interaction, core promoter recognition and selectivity, TFIIA and TFIIB interaction, facilitation of DNA opening and initiation of transcription. TFIIF is essential for the initiation of transcription by RNA polymerase II. TFIIF functions include the recruitment of RNA polymerase II to the promoter bound DNA-TBP-TFIIB complex, decreasing the affinity of RNA polymerase II for non-specific DNA, allowing for the subsequent recruitment of TFIIE and TFIIH, and facilitating RNA polymerase II elongation. The TAF14 subunit has stimulatory activity. Component of the SWI/SNF complex, an ATP-dependent chromatin remodeling complex, required for the positive and negative regulation of gene expression of a large number of genes. It changes chromatin structure by altering DNA-histone contacts within a nucleosome, leading eventually to a change in nucleosome position, thus facilitating or repressing binding of gene-specific transcription factors. Component of the mst2 complex which is a highly specific H3 lysine 14 (H3K14) acetyltransferase that functions together with gcn5 to regulate global levels of H3K14 acetylation (H3K14ac), critical for DNA damage checkpoint activation. The polypeptide is Transcription initiation factor TFIID subunit 14 (tfg3) (Schizosaccharomyces pombe (strain 972 / ATCC 24843) (Fission yeast)).